Reading from the N-terminus, the 886-residue chain is Alanine--tRNA ligase (886 aa).

Zn(2+) contacts are provided by His564, His568, Cys676, and His680.

The protein belongs to the class-II aminoacyl-tRNA synthetase family. The cofactor is Zn(2+).

It is found in the cytoplasm. It catalyses the reaction tRNA(Ala) + L-alanine + ATP = L-alanyl-tRNA(Ala) + AMP + diphosphate. Functionally, catalyzes the attachment of alanine to tRNA(Ala) in a two-step reaction: alanine is first activated by ATP to form Ala-AMP and then transferred to the acceptor end of tRNA(Ala). Also edits incorrectly charged Ser-tRNA(Ala) and Gly-tRNA(Ala) via its editing domain. The chain is Alanine--tRNA ligase from Bartonella bacilliformis.